The primary structure comprises 515 residues: Probable cytosol aminopeptidase (515 aa).

The Mn(2+) site is built by Lys-277 and Asp-282. The active site involves Lys-289. Residues Asp-300, Asp-359, and Glu-361 each coordinate Mn(2+). The active site involves Arg-363.

Belongs to the peptidase M17 family. Requires Mn(2+) as cofactor.

Its subcellular location is the cytoplasm. The enzyme catalyses Release of an N-terminal amino acid, Xaa-|-Yaa-, in which Xaa is preferably Leu, but may be other amino acids including Pro although not Arg or Lys, and Yaa may be Pro. Amino acid amides and methyl esters are also readily hydrolyzed, but rates on arylamides are exceedingly low.. It catalyses the reaction Release of an N-terminal amino acid, preferentially leucine, but not glutamic or aspartic acids.. Functionally, presumably involved in the processing and regular turnover of intracellular proteins. Catalyzes the removal of unsubstituted N-terminal amino acids from various peptides. This is Probable cytosol aminopeptidase from Streptomyces griseus subsp. griseus (strain JCM 4626 / CBS 651.72 / NBRC 13350 / KCC S-0626 / ISP 5235).